The sequence spans 246 residues: Ribosome maturation factor RimM (246 aa).

The segment covering Met-1–Gln-15 has biased composition (basic and acidic residues). The disordered stretch occupies residues Met-1–Asp-63. Residues Val-45–Asn-54 show a composition bias toward pro residues. The PRC barrel domain occupies Gly-158–Leu-239.

It belongs to the RimM family. In terms of assembly, binds ribosomal protein uS19.

It localises to the cytoplasm. An accessory protein needed during the final step in the assembly of 30S ribosomal subunit, possibly for assembly of the head region. Essential for efficient processing of 16S rRNA. May be needed both before and after RbfA during the maturation of 16S rRNA. It has affinity for free ribosomal 30S subunits but not for 70S ribosomes. The sequence is that of Ribosome maturation factor RimM from Nostoc sp. (strain PCC 7120 / SAG 25.82 / UTEX 2576).